Reading from the N-terminus, the 103-residue chain is Cell division protein FtsB (103 aa).

The Cytoplasmic portion of the chain corresponds to 1–3 (MGK). A helical membrane pass occupies residues 4 to 21 (LTLLLLAILVWLQYSLWF). Over 22 to 103 (GKNGIHDYTR…RAQSAGQNNR (82 aa)) the chain is Periplasmic. Residues 28-71 (DYTRVNDDVAALQATNAKLKARNDQLFAEIDDLNGGQEALEERA) are a coiled coil.

Belongs to the FtsB family. Part of a complex composed of FtsB, FtsL and FtsQ.

Its subcellular location is the cell inner membrane. Essential cell division protein. May link together the upstream cell division proteins, which are predominantly cytoplasmic, with the downstream cell division proteins, which are predominantly periplasmic. This chain is Cell division protein FtsB, found in Shigella flexneri serotype 5b (strain 8401).